Here is a 305-residue protein sequence, read N- to C-terminus: Serine/threonine-protein phosphatase PP2A catalytic subunit (305 aa).

Residues aspartate 53, histidine 55, aspartate 81, and asparagine 113 each coordinate Mn(2+). Histidine 114 serves as the catalytic Proton donor. Mn(2+)-binding residues include histidine 163 and histidine 237.

It belongs to the PPP phosphatase family. PP-2A subfamily. The cofactor is Mn(2+).

The catalysed reaction is O-phospho-L-seryl-[protein] + H2O = L-seryl-[protein] + phosphate. It catalyses the reaction O-phospho-L-threonyl-[protein] + H2O = L-threonyl-[protein] + phosphate. This Helianthus annuus (Common sunflower) protein is Serine/threonine-protein phosphatase PP2A catalytic subunit.